The following is a 366-amino-acid chain: Glycerol-3-phosphate dehydrogenase [NAD(+)], glycosomal (366 aa).

Residues 22–27 (GSGAFG), F97, K125, and A157 contribute to the NAD(+) site. K125 contacts substrate. The active-site Proton acceptor is K210. R274, V298, and E300 together coordinate NAD(+). 274–275 (RN) is a binding site for substrate. Positions 364–366 (SKL) match the Microbody targeting signal motif.

Belongs to the NAD-dependent glycerol-3-phosphate dehydrogenase family. Homodimer.

It is found in the glycosome. It catalyses the reaction sn-glycerol 3-phosphate + NAD(+) = dihydroxyacetone phosphate + NADH + H(+). This Leishmania mexicana protein is Glycerol-3-phosphate dehydrogenase [NAD(+)], glycosomal (GPD).